The primary structure comprises 1759 residues: Protein TIC 214 (1759 aa).

Helical transmembrane passes span 23–45 (VVVG…LFLL), 64–84 (FITG…HLAL), 129–149 (IFFQ…SSIF), 172–192 (IGWI…LICI), and 221–241 (IFVV…PPPF).

Belongs to the TIC214 family. As to quaternary structure, part of the Tic complex.

Its subcellular location is the plastid. The protein resides in the chloroplast inner membrane. Functionally, involved in protein precursor import into chloroplasts. May be part of an intermediate translocation complex acting as a protein-conducting channel at the inner envelope. This Phaseolus vulgaris (Kidney bean) protein is Protein TIC 214.